The primary structure comprises 599 residues: Elongation factor 4 (599 aa).

The tr-type G domain maps to 2–184; the sequence is KNIRNFSIIA…RLVRDIPPPE (183 aa). GTP contacts are provided by residues 14–19 and 131–134; these read DHGKST and NKID.

Belongs to the TRAFAC class translation factor GTPase superfamily. Classic translation factor GTPase family. LepA subfamily.

The protein resides in the cell inner membrane. It catalyses the reaction GTP + H2O = GDP + phosphate + H(+). Functionally, required for accurate and efficient protein synthesis under certain stress conditions. May act as a fidelity factor of the translation reaction, by catalyzing a one-codon backward translocation of tRNAs on improperly translocated ribosomes. Back-translocation proceeds from a post-translocation (POST) complex to a pre-translocation (PRE) complex, thus giving elongation factor G a second chance to translocate the tRNAs correctly. Binds to ribosomes in a GTP-dependent manner. In Shigella dysenteriae serotype 1 (strain Sd197), this protein is Elongation factor 4.